The chain runs to 1021 residues: Sodium/potassium-transporting ATPase subunit alpha-1 (1021 aa).

Residues 1-5 (MGKGG) constitute a propeptide that is removed on maturation. Positions 1-11 (MGKGGGRDKYE) are enriched in basic and acidic residues. The tract at residues 1 to 37 (MGKGGGRDKYEPAAISEHGNKKKAKKERDMDELKKEV) is disordered. Residues 6–85 (GRDKYEPAAI…NALTPPPTTP (80 aa)) lie on the Cytoplasmic side of the membrane. The residue at position 9 (Lys9) is an N6-acetyllysine. Tyr10 is modified (phosphotyrosine). At Ser16 the chain carries Phosphoserine; by PKC. Lys21 carries the post-translational modification N6-acetyllysine. Over residues 26–37 (KERDMDELKKEV) the composition is skewed to basic and acidic residues. A phosphoserine mark is found at Ser38 and Ser45. A phosphoinositide-3 kinase binding region spans residues 80 to 82 (PPP). The chain crosses the membrane as a helical span at residues 86 to 106 (EWVKFCRQLFGGFSMLLWIGA). The Extracellular segment spans residues 107 to 129 (ILCFLAYGIQAATEEEPQNDNLY). A helical membrane pass occupies residues 130–150 (LGVVLSAVVIITGCFSYYQEA). Residues 151-286 (KSSKIMESFK…GGQTPIAAEI (136 aa)) are Cytoplasmic-facing. The interval 214–233 (SSLTGESEPQTRSPDFTNEN) is disordered. Ser226 carries the post-translational modification Phosphoserine. A Phosphotyrosine modification is found at Tyr258. Residues 287 to 306 (EHFIHIITGVAVFLGVTFFI) form a helical membrane-spanning segment. The Extracellular segment spans residues 307–318 (LSLILEYTWLEA). The chain crosses the membrane as a helical span at residues 319 to 336 (VIFLIGIIVANVPEGLLA). At 337-770 (TVTVCLTLTA…EEGRLIFDNL (434 aa)) the chain is on the cytoplasmic side. Residue Asp374 is the 4-aspartylphosphate intermediate of the active site. Phosphoserine occurs at positions 450 and 482. Residue Lys485 participates in ATP binding. A Phosphotyrosine modification is found at Tyr540. The interval 594–715 (RAAVPDAVGK…QGAIVAVTGD (122 aa)) is mediates interaction with SCN7A. Position 659 is an N6-succinyllysine (Lys659). Ser666 is modified (phosphoserine). Asp715 and Asp719 together coordinate Mg(2+). A helical membrane pass occupies residues 771–790 (KKSIAYTLTSNIPEITPFLI). The Extracellular segment spans residues 791–800 (FIIANIPLPL). Residues 801–821 (GTVTILCIDLGTDMVPAISLA) traverse the membrane as a helical segment. The Cytoplasmic portion of the chain corresponds to 822–841 (YEQAESDIMKRQPRNPQTDK). A helical transmembrane segment spans residues 842–864 (LVNERLISMAYGQIGMIQALGGF). Over 865 to 916 (FTYFVILAENGFLPIHLLGLRVDWDDRWVNDVEDSYGQQWTYEQRKIVEFTC) the chain is Extracellular. Residues 917–936 (HTAFFVSIVVVQWADLVICK) form a helical membrane-spanning segment. At 937–949 (TRRNSVFQQGMKN) the chain is on the cytoplasmic side. Ser941 is subject to Phosphoserine; by PKA. A helical transmembrane segment spans residues 950–968 (KILIFGLFEETALAAFLSY). Residues 969–983 (CPGMGVALRMYPLKP) are Extracellular-facing. Residues 984–1004 (TWWFCAFPYSLLIFVYDEVRK) form a helical membrane-spanning segment. The Cytoplasmic portion of the chain corresponds to 1005–1021 (LIIRRRPGGWVEKETYY).

It belongs to the cation transport ATPase (P-type) (TC 3.A.3) family. Type IIC subfamily. In terms of assembly, the sodium/potassium-transporting ATPase is composed of a catalytic alpha subunit, an auxiliary non-catalytic beta subunit and an additional regulatory subunit. Interacts with regulatory subunit FXYD1. Interacts with regulatory subunit FXYD3. Interacts with SIK1. Interacts with SLC35G1 and STIM1. Interacts with CLN3; this interaction regulates the sodium/potassium-transporting ATPase complex localization at the plasma membrane. Interacts with SCN7A; activates ATP1A1 P-type sodium:potassium-exchanging transporter activity which indirectly signals to nearby neurons to regulate sodium homeostasis. Post-translationally, phosphorylation on Tyr-10 modulates pumping activity. Phosphorylation of Ser-941 by PKA modulates the response of ATP1A1 to PKC. Dephosphorylation by protein phosphatase 2A (PP2A) following increases in intracellular sodium, leading to increase catalytic activity.

It is found in the cell membrane. The protein resides in the basolateral cell membrane. Its subcellular location is the sarcolemma. The protein localises to the cell projection. It localises to the axon. It is found in the melanosome. The enzyme catalyses K(+)(out) + Na(+)(in) + ATP + H2O = K(+)(in) + Na(+)(out) + ADP + phosphate + H(+). Its function is as follows. This is the catalytic component of the active enzyme, which catalyzes the hydrolysis of ATP coupled with the exchange of sodium and potassium ions across the plasma membrane. This action creates the electrochemical gradient of sodium and potassium ions, providing the energy for active transport of various nutrients. Could also be part of an osmosensory signaling pathway that senses body-fluid sodium levels and controls salt intake behavior as well as voluntary water intake to regulate sodium homeostasis. The chain is Sodium/potassium-transporting ATPase subunit alpha-1 (ATP1A1) from Equus caballus (Horse).